We begin with the raw amino-acid sequence, 459 residues long: Serine carboxypeptidase-like 27 (459 aa).

An N-terminal signal peptide occupies residues Met-1–Ala-20. Cystine bridges form between Cys-91–Cys-344, Cys-252–Cys-264, and Cys-288–Cys-312. N-linked (GlcNAc...) asparagine glycosylation is present at Asn-142. Residue Ser-184 is part of the active site. Residues Asn-289 and Asn-333 are each glycosylated (N-linked (GlcNAc...) asparagine). Active-site residues include Asp-381 and His-433.

Belongs to the peptidase S10 family. Ubiquitous.

Its subcellular location is the secreted. Probable carboxypeptidase. The protein is Serine carboxypeptidase-like 27 (SCPL27) of Arabidopsis thaliana (Mouse-ear cress).